The sequence spans 229 residues: Leucyl/phenylalanyl-tRNA--protein transferase (229 aa).

It belongs to the L/F-transferase family.

The protein resides in the cytoplasm. The enzyme catalyses N-terminal L-lysyl-[protein] + L-leucyl-tRNA(Leu) = N-terminal L-leucyl-L-lysyl-[protein] + tRNA(Leu) + H(+). It carries out the reaction N-terminal L-arginyl-[protein] + L-leucyl-tRNA(Leu) = N-terminal L-leucyl-L-arginyl-[protein] + tRNA(Leu) + H(+). It catalyses the reaction L-phenylalanyl-tRNA(Phe) + an N-terminal L-alpha-aminoacyl-[protein] = an N-terminal L-phenylalanyl-L-alpha-aminoacyl-[protein] + tRNA(Phe). Its function is as follows. Functions in the N-end rule pathway of protein degradation where it conjugates Leu, Phe and, less efficiently, Met from aminoacyl-tRNAs to the N-termini of proteins containing an N-terminal arginine or lysine. The sequence is that of Leucyl/phenylalanyl-tRNA--protein transferase from Pseudomonas syringae pv. tomato (strain ATCC BAA-871 / DC3000).